The primary structure comprises 74 residues: Exodeoxyribonuclease 7 small subunit (74 aa).

The protein belongs to the XseB family. In terms of assembly, heterooligomer composed of large and small subunits.

The protein resides in the cytoplasm. The enzyme catalyses Exonucleolytic cleavage in either 5'- to 3'- or 3'- to 5'-direction to yield nucleoside 5'-phosphates.. Its function is as follows. Bidirectionally degrades single-stranded DNA into large acid-insoluble oligonucleotides, which are then degraded further into small acid-soluble oligonucleotides. The sequence is that of Exodeoxyribonuclease 7 small subunit from Clostridium beijerinckii (strain ATCC 51743 / NCIMB 8052) (Clostridium acetobutylicum).